Here is a 684-residue protein sequence, read N- to C-terminus: Translation factor GUF1 homolog, mitochondrial (684 aa).

Residues 82–270 (HLIRNFSIIA…AVIERIPQPK (189 aa)) form the tr-type G domain. GTP-binding positions include 91–98 (AHVDHGKS), 163–167 (DTPGH), and 217–220 (NKID).

Belongs to the TRAFAC class translation factor GTPase superfamily. Classic translation factor GTPase family. LepA subfamily.

The protein resides in the mitochondrion inner membrane. It carries out the reaction GTP + H2O = GDP + phosphate + H(+). Its function is as follows. Promotes mitochondrial protein synthesis. May act as a fidelity factor of the translation reaction, by catalyzing a one-codon backward translocation of tRNAs on improperly translocated ribosomes. Binds to mitochondrial ribosomes in a GTP-dependent manner. The chain is Translation factor GUF1 homolog, mitochondrial from Physcomitrium patens (Spreading-leaved earth moss).